The chain runs to 249 residues: Expansin-A18 (249 aa).

The signal sequence occupies residues 1 to 21; sequence MGNIVLQLLAILALCIAPARS. One can recognise an Expansin-like EG45 domain in the interval 41-154; it reads GGACGYGNLY…QQVKCWRSGG (114 aa). N-linked (GlcNAc...) asparagine glycosylation occurs at N116. One can recognise an Expansin-like CBD domain in the interval 164–243; it reads YFELVLVTNM…GWSFGQTFST (80 aa).

Belongs to the expansin family. Expansin A subfamily. Expressed in roots.

The protein resides in the secreted. The protein localises to the cell wall. Its subcellular location is the membrane. Functionally, may cause loosening and extension of plant cell walls by disrupting non-covalent bonding between cellulose microfibrils and matrix glucans. No enzymatic activity has been found. May be required for rapid internodal elongation in deepwater rice during submergence. In Oryza sativa subsp. japonica (Rice), this protein is Expansin-A18 (EXPA18).